An 844-amino-acid polypeptide reads, in one-letter code: 3',5'-cyclic-AMP phosphodiesterase 4A (844 aa).

A disordered region spans residues 1–124 (MEPPAAPSER…RSPLDSQASP (124 aa)). S13 is subject to Phosphoserine. Positions 36–46 (QPRTPIRIQQR) are enriched in low complexity. Positions 51-78 (SAERSEPERSPHRPIERADAVDTGDRPG) are enriched in basic and acidic residues. Polar residues predominate over residues 82–91 (TRMSWPSSFH). Phosphoserine is present on residues S147, S152, S160, S204, and S333. Residues 343–672 (VKTDQEDLLA…DWYHSAIRQS (330 aa)) form the PDEase domain. Residue K344 forms a Glycyl lysine isopeptide (Lys-Gly) (interchain with G-Cter in SUMO) linkage. H419 (proton donor) is an active-site residue. Residue H419 participates in 3',5'-cyclic AMP binding. H419 and H423 together coordinate AMP. H423, H459, D460, and D577 together coordinate Zn(2+). Residues D460, D577, Q628, and F631 each contribute to the AMP site. D460 serves as a coordination point for Mg(2+). Residue D460 coordinates Mn(2+). Q628 and F631 together coordinate 3',5'-cyclic AMP. Phosphoserine occurs at positions 672 and 674. A disordered region spans residues 819-844 (ACSGTSGDNSAVISAPGRWGSGGDPA). Residues 820 to 830 (CSGTSGDNSAV) show a composition bias toward polar residues.

The protein belongs to the cyclic nucleotide phosphodiesterase family. PDE4 subfamily. Interacts with LYN (via SH3 domain). Interacts with ARRB2. Zn(2+) serves as cofactor. Requires Mg(2+) as cofactor. Mn(2+) is required as a cofactor. Post-translationally, proteolytically cleaved by CASP3.

The protein localises to the cytoplasm. It localises to the cytosol. The protein resides in the membrane. It catalyses the reaction 3',5'-cyclic AMP + H2O = AMP + H(+). It functions in the pathway purine metabolism; 3',5'-cyclic AMP degradation; AMP from 3',5'-cyclic AMP: step 1/1. Its activity is regulated as follows. Inhibited by rolipram and diazepam. Its function is as follows. Hydrolyzes the second messenger 3',5'-cyclic AMP (cAMP), which is a key regulator of many important physiological processes. Functionally, efficiently hydrolyzes cAMP. The protein is 3',5'-cyclic-AMP phosphodiesterase 4A (Pde4a) of Mus musculus (Mouse).